The sequence spans 465 residues: Cysteine--tRNA ligase (465 aa).

Residue cysteine 27 coordinates Zn(2+). Positions 29–39 match the 'HIGH' region motif; the sequence is PTVYDDAHLGH. Positions 207, 237, and 241 each coordinate Zn(2+). The 'KMSKS' region signature appears at 269–273; sequence KMSKS. Lysine 272 contacts ATP.

This sequence belongs to the class-I aminoacyl-tRNA synthetase family. In terms of assembly, monomer. The cofactor is Zn(2+).

It localises to the cytoplasm. It carries out the reaction tRNA(Cys) + L-cysteine + ATP = L-cysteinyl-tRNA(Cys) + AMP + diphosphate. The sequence is that of Cysteine--tRNA ligase from Helicobacter pylori (strain Shi470).